Here is a 542-residue protein sequence, read N- to C-terminus: Putative beta-glucosidase 23 (542 aa).

Positions 1–29 (MAACTSSLVSLLLLLLLLLLLLVAGEATA) are cleaved as a signal peptide. N-linked (GlcNAc...) asparagine glycosylation occurs at Asn34. Gln88 contacts a beta-D-glucoside. The N-linked (GlcNAc...) asparagine glycan is linked to Asn135. An a beta-D-glucoside-binding site is contributed by His216. The Proton donor role is filled by Glu262. A disulfide bond links Cys281 and Cys289. Tyr405 serves as a coordination point for a beta-D-glucoside. Asn445 carries an N-linked (GlcNAc...) asparagine glycan. Residues Trp476 and Phe492 each contribute to the a beta-D-glucoside site.

The protein belongs to the glycosyl hydrolase 1 family.

It catalyses the reaction Hydrolysis of terminal, non-reducing beta-D-glucosyl residues with release of beta-D-glucose.. This is Putative beta-glucosidase 23 (BGLU23) from Oryza sativa subsp. japonica (Rice).